The sequence spans 247 residues: Protein NipSnap homolog 3B (247 aa).

N6-succinyllysine occurs at positions 45 and 57.

This sequence belongs to the NipSnap family.

The sequence is that of Protein NipSnap homolog 3B (NIPSNAP3B) from Homo sapiens (Human).